Here is a 332-residue protein sequence, read N- to C-terminus: Ectoine dioxygenase (332 aa).

The segment covering 1–10 (MSVQTSSNRP) has biased composition (polar residues). A disordered region spans residues 1–47 (MSVQTSSNRPLPQANLHIATETPEADSRIRSAPRPGQDPYPTRLSEP). Glutamine 163 is an L-ectoine binding site. Lysine 169 contacts 2-oxoglutarate. Residues histidine 180, aspartate 182, and histidine 281 each coordinate Fe cation.

Belongs to the PhyH family. EctD subfamily. As to quaternary structure, homodimer. Fe(2+) serves as cofactor.

The catalysed reaction is L-ectoine + 2-oxoglutarate + O2 = 5-hydroxyectoine + succinate + CO2. Its function is as follows. Involved in the biosynthesis of 5-hydroxyectoine, called compatible solute, which helps organisms to survive extreme osmotic stress by acting as a highly soluble organic osmolyte. Catalyzes the 2-oxoglutarate-dependent selective hydroxylation of L-ectoine to yield (4S,5S)-5-hydroxyectoine. The sequence is that of Ectoine dioxygenase from Halomonas elongata (strain ATCC 33173 / DSM 2581 / NBRC 15536 / NCIMB 2198 / 1H9).